The sequence spans 51 residues: Toxin CSTX-18 (51 aa).

4 disulfides stabilise this stretch: cysteine 9/cysteine 22, cysteine 14/cysteine 27, cysteine 21/cysteine 36, and cysteine 29/cysteine 34.

Post-translationally, contains 4 disulfide bonds. In terms of tissue distribution, expressed by the venom gland.

It is found in the secreted. The polypeptide is Toxin CSTX-18 (Cupiennius salei (American wandering spider)).